A 297-amino-acid chain; its full sequence is Probable deoxyhypusine synthase (297 aa).

Lys265 (nucleophile) is an active-site residue.

This sequence belongs to the deoxyhypusine synthase family. Requires NAD(+) as cofactor.

It catalyses the reaction [eIF5A protein]-L-lysine + spermidine = [eIF5A protein]-deoxyhypusine + propane-1,3-diamine. It participates in protein modification; eIF5A hypusination. In terms of biological role, catalyzes the NAD-dependent oxidative cleavage of spermidine and the subsequent transfer of the butylamine moiety of spermidine to the epsilon-amino group of a specific lysine residue of the eIF-5A precursor protein to form the intermediate deoxyhypusine residue. This chain is Probable deoxyhypusine synthase, found in Methanopyrus kandleri (strain AV19 / DSM 6324 / JCM 9639 / NBRC 100938).